Reading from the N-terminus, the 73-residue chain is Large ribosomal subunit protein bL31 (73 aa).

It belongs to the bacterial ribosomal protein bL31 family. Type A subfamily. In terms of assembly, part of the 50S ribosomal subunit.

In terms of biological role, binds the 23S rRNA. The chain is Large ribosomal subunit protein bL31 from Mesorhizobium japonicum (strain LMG 29417 / CECT 9101 / MAFF 303099) (Mesorhizobium loti (strain MAFF 303099)).